The chain runs to 120 residues: NAD(P)H-quinone oxidoreductase subunit 3, chloroplastic (120 aa).

The next 3 helical transmembrane spans lie at 9 to 29, 64 to 84, and 88 to 108; these read IFWA…XISG, MFAL…PWAM, and VLGV…IVGL.

Belongs to the complex I subunit 3 family. NDH is composed of at least 16 different subunits, 5 of which are encoded in the nucleus.

Its subcellular location is the plastid. The protein localises to the chloroplast thylakoid membrane. It catalyses the reaction a plastoquinone + NADH + (n+1) H(+)(in) = a plastoquinol + NAD(+) + n H(+)(out). The enzyme catalyses a plastoquinone + NADPH + (n+1) H(+)(in) = a plastoquinol + NADP(+) + n H(+)(out). NDH shuttles electrons from NAD(P)H:plastoquinone, via FMN and iron-sulfur (Fe-S) centers, to quinones in the photosynthetic chain and possibly in a chloroplast respiratory chain. The immediate electron acceptor for the enzyme in this species is believed to be plastoquinone. Couples the redox reaction to proton translocation, and thus conserves the redox energy in a proton gradient. This chain is NAD(P)H-quinone oxidoreductase subunit 3, chloroplastic, found in Eucalyptus globulus subsp. globulus (Tasmanian blue gum).